Reading from the N-terminus, the 103-residue chain is Histone H4 (103 aa).

The span at 1–14 (MTGRGKGGKGLGKG) shows a compositional bias: gly residues. The segment at 1 to 20 (MTGRGKGGKGLGKGGAKRHR) is disordered. An N6-acetyl-N6-methyllysine; alternate mark is found at Lys-6 and Lys-13. Residues 17–21 (KRHRK) mediate DNA binding.

It belongs to the histone H4 family. As to quaternary structure, the nucleosome is a histone octamer containing two molecules each of H2A, H2B, H3 and H4 assembled in one H3-H4 heterotetramer and two H2A-H2B heterodimers. The octamer wraps approximately 147 bp of DNA.

It localises to the nucleus. The protein localises to the chromosome. Functionally, core component of nucleosome. Nucleosomes wrap and compact DNA into chromatin, limiting DNA accessibility to the cellular machineries which require DNA as a template. Histones thereby play a central role in transcription regulation, DNA repair, DNA replication and chromosomal stability. DNA accessibility is regulated via a complex set of post-translational modifications of histones, also called histone code, and nucleosome remodeling. The chain is Histone H4 from Trichogramma cacaeciae (Moth egg parasite).